Here is a 772-residue protein sequence, read N- to C-terminus: General transcription and DNA repair factor IIH helicase subunit XPD (772 aa).

Residues 7-283 (DLPILFPYPR…QSDSKKLQDE (277 aa)) enclose the Helicase ATP-binding domain. 42–49 (MPSGTGKT) contacts ATP. The [4Fe-4S] cluster site is built by cysteine 115, cysteine 133, cysteine 154, and cysteine 189. Positions 233 to 236 (DEAH) match the DEAH box motif.

The protein belongs to the helicase family. RAD3/XPD subfamily. As to quaternary structure, component of the 7-subunit TFIIH core complex composed of XPB/ptr8, XPD/rad15, ssl1, tfb1, tfb2, tfb4 and tfb5, which is active in NER. The core complex associates with the 3-subunit CTD-kinase module TFIIK composed of mcs2/cyclin H, mcs6/cdk7 and pmh1/tfb3 to form the 10-subunit holoenzyme (holo-TFIIH) active in transcription. [4Fe-4S] cluster serves as cofactor.

It is found in the nucleus. The enzyme catalyses Couples ATP hydrolysis with the unwinding of duplex DNA at the replication fork by translocating in the 5'-3' direction. This creates two antiparallel DNA single strands (ssDNA). The leading ssDNA polymer is the template for DNA polymerase III holoenzyme which synthesizes a continuous strand.. It catalyses the reaction ATP + H2O = ADP + phosphate + H(+). Functionally, ATP-dependent 5'-3' DNA helicase, component of the general transcription and DNA repair factor IIH (TFIIH) core complex, which is involved in general and transcription-coupled nucleotide excision repair (NER) of damaged DNA and, when complexed to TFIIK, in RNA transcription by RNA polymerase II. In NER, TFIIH acts by opening DNA around the lesion to allow the excision of the damaged oligonucleotide and its replacement by a new DNA fragment. The ATP-dependent helicase activity of XPD/rad15 is required for DNA opening. In transcription, TFIIH has an essential role in transcription initiation. When the pre-initiation complex (PIC) has been established, TFIIH is required for promoter opening and promoter escape. Phosphorylation of the C-terminal tail (CTD) of the largest subunit of RNA polymerase II by the kinase module TFIIK controls the initiation of transcription. XPD/rad15 acts by forming a bridge between TFIIK and the core-TFIIH complex. Involved in the maintenance of the fidelity of DNA replication. The chain is General transcription and DNA repair factor IIH helicase subunit XPD from Schizosaccharomyces pombe (strain 972 / ATCC 24843) (Fission yeast).